The following is a 917-amino-acid chain: Protein translocase subunit SecA 1 (917 aa).

ATP is bound by residues glutamine 87, 105-109 (GEGKT), and aspartate 507. Residues 866 to 917 (EKSPESIGEDIEGREHPQKHQPFVRQGEKIGRNDPCPCGSGKKYKQCHGKLN) form a disordered region. Residues cysteine 901, cysteine 903, cysteine 912, and histidine 913 each contribute to the Zn(2+) site. The segment covering 907–917 (KKYKQCHGKLN) has biased composition (basic residues).

It belongs to the SecA family. As to quaternary structure, monomer and homodimer. Part of the essential Sec protein translocation apparatus which comprises SecA, SecYEG and auxiliary proteins SecDF-YajC and YidC. Zn(2+) serves as cofactor.

The protein resides in the cell inner membrane. It localises to the cytoplasm. The catalysed reaction is ATP + H2O + cellular proteinSide 1 = ADP + phosphate + cellular proteinSide 2.. Functionally, part of the Sec protein translocase complex. Interacts with the SecYEG preprotein conducting channel. Has a central role in coupling the hydrolysis of ATP to the transfer of proteins into and across the cell membrane, serving both as a receptor for the preprotein-SecB complex and as an ATP-driven molecular motor driving the stepwise translocation of polypeptide chains across the membrane. The chain is Protein translocase subunit SecA 1 from Nitrosospira multiformis (strain ATCC 25196 / NCIMB 11849 / C 71).